A 304-amino-acid polypeptide reads, in one-letter code: MSNVLELTIPASTANLGVGFDSIGMALDKFLHLSVKETSGTKWEYIFHDDASKQLPTDETNFIYHVAQQVASKYSVDLPNLCIEMRSDIPLARGLGSSASALVGAIYIANYFGDIQLSKHEVLQLATEIEGHPDNVAPTIYGGLIAGYYNDVSKETSVAHIDIPDVDVIVTIPTYELKTEASRRALPQKLTHSEAVKSSAISNTMICALAQHNYELAGKLMQQDGFHEPYRQHLIAEFDEVKTIAIQHNAYATVISGAGPTILIFSRKENSGELVRSLNSQVVSCHSELVDINISGVKERIVYQ.

ATP is bound at residue 90–100; the sequence is PLARGLGSSAS.

This sequence belongs to the GHMP kinase family. Homoserine kinase subfamily.

It is found in the cytoplasm. The enzyme catalyses L-homoserine + ATP = O-phospho-L-homoserine + ADP + H(+). It functions in the pathway amino-acid biosynthesis; L-threonine biosynthesis; L-threonine from L-aspartate: step 4/5. Catalyzes the ATP-dependent phosphorylation of L-homoserine to L-homoserine phosphate. The chain is Homoserine kinase from Staphylococcus aureus (strain MSSA476).